Reading from the N-terminus, the 369-residue chain is Transposase for insertion sequence element IS1201 (369 aa).

It belongs to the transposase mutator family.

Its function is as follows. Required for the transposition of the insertion element. This chain is Transposase for insertion sequence element IS1201, found in Lactobacillus helveticus (Lactobacillus suntoryeus).